The primary structure comprises 156 residues: Small ribosomal subunit protein uS7 (156 aa).

It belongs to the universal ribosomal protein uS7 family. Part of the 30S ribosomal subunit. Contacts proteins S9 and S11.

Functionally, one of the primary rRNA binding proteins, it binds directly to 16S rRNA where it nucleates assembly of the head domain of the 30S subunit. Is located at the subunit interface close to the decoding center, probably blocks exit of the E-site tRNA. This is Small ribosomal subunit protein uS7 from Shewanella frigidimarina (strain NCIMB 400).